Consider the following 252-residue polypeptide: Trans-aconitate 2-methyltransferase (252 aa).

This sequence belongs to the methyltransferase superfamily. Tam family.

Its subcellular location is the cytoplasm. The catalysed reaction is trans-aconitate + S-adenosyl-L-methionine = (E)-3-(methoxycarbonyl)pent-2-enedioate + S-adenosyl-L-homocysteine. In terms of biological role, catalyzes the S-adenosylmethionine monomethyl esterification of trans-aconitate. This Escherichia coli O7:K1 (strain IAI39 / ExPEC) protein is Trans-aconitate 2-methyltransferase.